Consider the following 261-residue polypeptide: MAVGKNKRISKGKKGGKKKATDPFAKKDWYDIKAPNVFQNKNVGKTLVSRTQGTKIASEGLKHRVFEVCLADLQGDEDQAYRKIRLRAEDVQGKNVLTNFYGMDFTTDKLRSLVRKWQTLIEAHVDVKTTDSYTLRMFCIGFTKKRANQQKRTCYAQSSQIRQIRRKMVEIMRNQASSCDLKELVAKFIPESIGREIEKATSSIFPLQNVFIRKVKILKAPKFDIGKLMEVHGDYSEDVGVKLERPIEETMVEGETEVVGA.

The span at 1-18 (MAVGKNKRISKGKKGGKK) shows a compositional bias: basic residues. The tract at residues 1-21 (MAVGKNKRISKGKKGGKKKAT) is disordered.

This sequence belongs to the eukaryotic ribosomal protein eS1 family. In terms of assembly, component of the small ribosomal subunit. Mature ribosomes consist of a small (40S) and a large (60S) subunit. The 40S subunit contains about 33 different proteins and 1 molecule of RNA (18S). The 60S subunit contains about 49 different proteins and 3 molecules of RNA (25S, 5.8S and 5S).

The protein localises to the cytoplasm. The sequence is that of Small ribosomal subunit protein eS1 (cyc07) from Daucus carota (Wild carrot).